The following is a 354-amino-acid chain: UDP-3-O-acylglucosamine N-acyltransferase (354 aa).

Residue H258 is the Proton acceptor of the active site.

This sequence belongs to the transferase hexapeptide repeat family. LpxD subfamily. In terms of assembly, homotrimer.

The catalysed reaction is a UDP-3-O-[(3R)-3-hydroxyacyl]-alpha-D-glucosamine + a (3R)-hydroxyacyl-[ACP] = a UDP-2-N,3-O-bis[(3R)-3-hydroxyacyl]-alpha-D-glucosamine + holo-[ACP] + H(+). It participates in bacterial outer membrane biogenesis; LPS lipid A biosynthesis. In terms of biological role, catalyzes the N-acylation of UDP-3-O-acylglucosamine using 3-hydroxyacyl-ACP as the acyl donor. Is involved in the biosynthesis of lipid A, a phosphorylated glycolipid that anchors the lipopolysaccharide to the outer membrane of the cell. This is UDP-3-O-acylglucosamine N-acyltransferase from Sinorhizobium medicae (strain WSM419) (Ensifer medicae).